The chain runs to 1015 residues: Cytosolic carboxypeptidase 1 (1015 aa).

The tract at residues 384 to 462 is disordered; it reads LPTATPSTPG…GALPKTTRLN (79 aa). Acidic residues predominate over residues 416–451; it reads EDGMDEEDEAFVRDDDDEGKDDRGSDDDDGKDDDEI. The region spanning 727-1013 is the Peptidase M14 domain; that stretch reads YPYTYSFLNS…DLLHSFLEMT (287 aa). Histidine 792, glutamate 795, and histidine 891 together coordinate Zn(2+). The Proton donor/acceptor role is filled by glutamate 977.

Belongs to the peptidase M14 family. The cofactor is Zn(2+). In terms of tissue distribution, in hermaphrodites and males, expressed in amphid and IL2 ciliated sensory neurons. In males, expressed in CEM head neurons, RnB and HOB tail neurons, and in gubernacular erector and retractor muscles.

The protein localises to the perikaryon. The protein resides in the cell projection. It is found in the cilium. It localises to the dendrite. Catalyzes the deglutamylation of polyglutamate side chains generated by post-translational polyglutamylation of proteins such as tubulins. Via the deglutamylation of tubulin, regulates the localization and velocity of kinesin motors and the structural integrity of microtubules in sensory cilia. In male CEM sensory neurons, regulates the cilia release of bioactive extracellular vesicles. Also regulates microtubule dynamics in uterine muscle cells. The sequence is that of Cytosolic carboxypeptidase 1 from Caenorhabditis elegans.